The sequence spans 449 residues: Malonyl-CoA:anthocyanidin 5-O-glucoside-6''-O-malonyltransferase (449 aa).

M1 is subject to N-acetylmethionine. Active-site proton acceptor residues include H162 and D394.

Belongs to the plant acyltransferase family. As to expression, expressed in flowers. Detected in leaves, stems, roots and siliques.

It catalyses the reaction anthocyanin A3 + malonyl-CoA = anthocyanin A5 + CoA. The enzyme catalyses anthocyanin A7 + malonyl-CoA = anthocyanin A9 + CoA. The catalysed reaction is anthocyanin A6 + malonyl-CoA = anthocyanin A8 + CoA. It carries out the reaction anthocyanin A10 + malonyl-CoA = anthocyanin A11 + CoA. Functionally, catalyzes the malonylation of the 5-O-glucose residue of anthocyanins, using malonyl-CoA as the malonyl donor. Acts only on anthocyanin substrates containing a 5-O-glucosyl moiety. Acts on the four native A.thaliana anthocyanins, A3, A7, and to a lesser extent, A6 and A10. Can also use the non-native anthocyanin compounds cyanin (cyanidin 3,5-diglucoside), malvin, pelargonidin 3,5-diglucoside, peonidin 3,5-diglucoside, cyanidin 3-coumaroylglucoside 5-glucoside, delphinidin 3-coumaroylrutinoside 5-glucoside and petunidin 3-coumaroylrutinoside 5-glucoside as substrates. Is the sole enzyme responsible for producing malonylated anthocyanin 5-O-glucosides in A.thaliana. Is not able to catalyze acyl transfer using acetyl-CoA, butyryl-CoA, hexanoyl-CoA, benzoyl-CoA, cinnamoyl-CoA, methylmalonyl-CoA, succinyl-CoA, p-coumaroyl-CoA or caffeoyl-CoA. The sequence is that of Malonyl-CoA:anthocyanidin 5-O-glucoside-6''-O-malonyltransferase (5MAT) from Arabidopsis thaliana (Mouse-ear cress).